The following is a 163-amino-acid chain: MPSFDIVSEIDMQEVRNAVENATRDLGTRWDFRNVPASFELNEKDESIKVASESDFQVQQLLDILREKLSKRSIEGSALEIPEEMTHSGKTYSVDAKLKQGIESAQAKKLVKLIKDSKLKVQVQIQGDEVRVTGKSRDDLQGVMALVRGADLGQPFQFKNFRD.

The protein belongs to the YajQ family.

In terms of biological role, nucleotide-binding protein. This is Nucleotide-binding protein Spro_1084 from Serratia proteamaculans (strain 568).